The primary structure comprises 157 residues: Galactose-specific lectin (157 aa).

Residues 12-157 form the Jacalin-type lectin domain; sequence SIVVGTWGAE…LDYIGFHLAL (146 aa). N-linked (GlcNAc...) asparagine glycosylation is present at Asn-45.

The protein belongs to the jacalin lectin family. Tetramer of heterodimers of light and heavy chains which are non-covalently linked. In terms of processing, N-linked carbohydrates at Asn-45 can be of complex or paucimannose type.

Its function is as follows. Alpha-D-galactose-specific lectin. Has hemagglutinating activity towards human and rabbit erythrocytes. Is highly cytotoxic to human cells in vitro. The polypeptide is Galactose-specific lectin (Morus indica (Mulberry)).